Consider the following 101-residue polypeptide: uncharacterized protein (101 aa).

The segment covering 1 to 12 has biased composition (basic residues); that stretch reads MAAFQHRAKRSK. Disordered regions lie at residues 1–30 and 65–87; these read MAAF…KKRA and AQDQ…NVDK. Residues 65–78 are compositionally biased toward low complexity; it reads AQDQRSDAQAQQQR.

This is an uncharacterized protein from Eremothecium gossypii (strain ATCC 10895 / CBS 109.51 / FGSC 9923 / NRRL Y-1056) (Yeast).